The primary structure comprises 239 residues: Ribosomal RNA small subunit methyltransferase G (239 aa).

S-adenosyl-L-methionine-binding positions include glycine 79, phenylalanine 84, 130–131 (AE), and arginine 149. The span at 218 to 227 (KHKKTPKKYP) shows a compositional bias: basic residues. Residues 218–239 (KHKKTPKKYPRQAGTPNKKPIA) are disordered.

It belongs to the methyltransferase superfamily. RNA methyltransferase RsmG family.

The protein resides in the cytoplasm. Specifically methylates the N7 position of a guanine in 16S rRNA. This Leuconostoc citreum (strain KM20) protein is Ribosomal RNA small subunit methyltransferase G.